Here is a 416-residue protein sequence, read N- to C-terminus: Homeobox protein ceh-62 (416 aa).

The segment covering 103–113 (TPTPIIATPSI) has biased composition (low complexity). Disordered regions lie at residues 103 to 144 (TPTP…QATR) and 178 to 247 (FQNR…FPPT). Polar residues predominate over residues 118–127 (QPLQSPSAPN). The segment at residues 130 to 189 (SRRKRTTFSPEQATRLEAEYIGDSYMAREKRHLLAQSLKLSENQVKTWFQNRRAKDKRDR) is a DNA-binding region (homeobox). The segment covering 193–218 (NASNHTSNSRRSSPSRKSSSDSTPTP) has biased composition (low complexity). The segment covering 219–240 (TQATQFDMPTQIQTASPPTTAD) has biased composition (polar residues).

Its subcellular location is the nucleus. The polypeptide is Homeobox protein ceh-62 (Caenorhabditis elegans).